Reading from the N-terminus, the 100-residue chain is METRQVSRSPRVRLLLLLLLLLVVPWGVRTASGVALPPVGVLSLRPPGRAWADPATPRPRRSLALADDAAFRERARLLAALERRHWLNSYMHKLLVLDAP.

The signal sequence occupies residues 1 to 30 (METRQVSRSPRVRLLLLLLLLLVVPWGVRT). Residues 31–59 (ASGVALPPVGVLSLRPPGRAWADPATPRP) constitute a propeptide that is removed on maturation.

It belongs to the parathyroid hormone family. Ligand of high affinity for the PTH2 receptor (PTH2R).

It is found in the secreted. Its function is as follows. Plays a role as a potent and selective agonist of PTH2R resulting in adenyl cyclase activation and intracellular calcium levels elevation. Induces protein kinase C beta activation, recruitment of beta-arrestin and PTH2R internalization. May inhibit cell proliferation via its action of PTH2R activation. Neuropeptide which may also have a role in spermatogenesis. May activate nociceptors and nociceptive circuits. This chain is Tuberoinfundibular peptide of 39 residues (PTH2), found in Bos taurus (Bovine).